Consider the following 172-residue polypeptide: 3-phenylpropionate/cinnamic acid dioxygenase subunit beta (172 aa).

Belongs to the bacterial ring-hydroxylating dioxygenase beta subunit family. As to quaternary structure, this dioxygenase system consists of four proteins: the two subunits of the hydroxylase component (HcaE and HcaF), a ferredoxin (HcaC) and a ferredoxin reductase (HcaD).

The enzyme catalyses 3-phenylpropanoate + NADH + O2 + H(+) = 3-(cis-5,6-dihydroxycyclohexa-1,3-dien-1-yl)propanoate + NAD(+). It catalyses the reaction (E)-cinnamate + NADH + O2 + H(+) = (2E)-3-(cis-5,6-dihydroxycyclohexa-1,3-dien-1-yl)prop-2-enoate + NAD(+). The protein operates within aromatic compound metabolism; 3-phenylpropanoate degradation. In terms of biological role, part of the multicomponent 3-phenylpropionate dioxygenase. Converts 3-phenylpropionic acid (PP) and cinnamic acid (CI) into 3-phenylpropionate-dihydrodiol (PP-dihydrodiol) and cinnamic acid-dihydrodiol (CI-dihydrodiol), respectively. This Shigella boydii serotype 4 (strain Sb227) protein is 3-phenylpropionate/cinnamic acid dioxygenase subunit beta.